The sequence spans 74 residues: Sec-independent protein translocase protein TatA (74 aa).

The helical transmembrane segment at 1–21 (MGGISIWNLVIIVLLVVLLFG) threads the bilayer. A disordered region spans residues 51-74 (AEFEKVEQKTAESTEQKAKEKEQA).

It belongs to the TatA/E family. As to quaternary structure, the Tat system comprises two distinct complexes: a TatABC complex, containing multiple copies of TatA, TatB and TatC subunits, and a separate TatA complex, containing only TatA subunits. Substrates initially bind to the TatABC complex, which probably triggers association of the separate TatA complex to form the active translocon.

Its subcellular location is the cell inner membrane. In terms of biological role, part of the twin-arginine translocation (Tat) system that transports large folded proteins containing a characteristic twin-arginine motif in their signal peptide across membranes. TatA could form the protein-conducting channel of the Tat system. The sequence is that of Sec-independent protein translocase protein TatA from Glaesserella parasuis serovar 5 (strain SH0165) (Haemophilus parasuis).